The following is a 414-amino-acid chain: CinA-like protein (414 aa).

It belongs to the CinA family.

The sequence is that of CinA-like protein from Geobacter sp. (strain M21).